Consider the following 208-residue polypeptide: Urease accessory protein UreG (208 aa).

10–17 (GPVGSGKT) serves as a coordination point for GTP.

The protein belongs to the SIMIBI class G3E GTPase family. UreG subfamily. As to quaternary structure, homodimer. UreD, UreF and UreG form a complex that acts as a GTP-hydrolysis-dependent molecular chaperone, activating the urease apoprotein by helping to assemble the nickel containing metallocenter of UreC. The UreE protein probably delivers the nickel.

The protein localises to the cytoplasm. Facilitates the functional incorporation of the urease nickel metallocenter. This process requires GTP hydrolysis, probably effectuated by UreG. This chain is Urease accessory protein UreG, found in Halalkalibacterium halodurans (strain ATCC BAA-125 / DSM 18197 / FERM 7344 / JCM 9153 / C-125) (Bacillus halodurans).